Consider the following 131-residue polypeptide: Small ribosomal subunit protein uS11 (131 aa).

This sequence belongs to the universal ribosomal protein uS11 family. In terms of assembly, part of the 30S ribosomal subunit. Interacts with proteins S7 and S18. Binds to IF-3.

In terms of biological role, located on the platform of the 30S subunit, it bridges several disparate RNA helices of the 16S rRNA. Forms part of the Shine-Dalgarno cleft in the 70S ribosome. In Wolinella succinogenes (strain ATCC 29543 / DSM 1740 / CCUG 13145 / JCM 31913 / LMG 7466 / NCTC 11488 / FDC 602W) (Vibrio succinogenes), this protein is Small ribosomal subunit protein uS11.